The chain runs to 126 residues: Fluoride-specific ion channel FluC (126 aa).

Helical transmembrane passes span 6–26 (VLLV…VALA), 32–52 (TGFP…IGFI), 68–90 (LLLT…ETGG), and 102–122 (LYVA…TLLA). Residues Gly-76 and Thr-79 each coordinate Na(+).

This sequence belongs to the fluoride channel Fluc/FEX (TC 1.A.43) family.

It localises to the cell inner membrane. The catalysed reaction is fluoride(in) = fluoride(out). With respect to regulation, na(+) is not transported, but it plays an essential structural role and its presence is essential for fluoride channel function. Fluoride-specific ion channel. Important for reducing fluoride concentration in the cell, thus reducing its toxicity. This is Fluoride-specific ion channel FluC from Chlorobaculum tepidum (strain ATCC 49652 / DSM 12025 / NBRC 103806 / TLS) (Chlorobium tepidum).